Here is a 166-residue protein sequence, read N- to C-terminus: Interferon gamma (166 aa).

An N-terminal signal peptide occupies residues 1 to 23; sequence MKYTSYFLALLLCGLLGFSGSYG. The residue at position 24 (Gln-24) is a Pyrrolidone carboxylic acid. Asn-39 and Asn-106 each carry an N-linked (GlcNAc...) asparagine glycan.

This sequence belongs to the type II (or gamma) interferon family. As to quaternary structure, homodimer. Interacts with IFNGR1 (via extracellular domain); this interaction promotes IFNGR1 dimerization. As to expression, released primarily from activated T lymphocytes.

The protein resides in the secreted. Type II interferon produced by immune cells such as T-cells and NK cells that plays crucial roles in antimicrobial, antiviral, and antitumor responses by activating effector immune cells and enhancing antigen presentation. Primarily signals through the JAK-STAT pathway after interaction with its receptor IFNGR1 to affect gene regulation. Upon IFNG binding, IFNGR1 intracellular domain opens out to allow association of downstream signaling components JAK2, JAK1 and STAT1, leading to STAT1 activation, nuclear translocation and transcription of IFNG-regulated genes. Many of the induced genes are transcription factors such as IRF1 that are able to further drive regulation of a next wave of transcription. Plays a role in class I antigen presentation pathway by inducing a replacement of catalytic proteasome subunits with immunoproteasome subunits. In turn, increases the quantity, quality, and repertoire of peptides for class I MHC loading. Increases the efficiency of peptide generation also by inducing the expression of activator PA28 that associates with the proteasome and alters its proteolytic cleavage preference. Up-regulates as well MHC II complexes on the cell surface by promoting expression of several key molecules such as cathepsins B/CTSB, H/CTSH, and L/CTSL. Participates in the regulation of hematopoietic stem cells during development and under homeostatic conditions by affecting their development, quiescence, and differentiation. In Bos taurus (Bovine), this protein is Interferon gamma (IFNG).